The sequence spans 420 residues: Gamma-glutamyl phosphate reductase (420 aa).

It belongs to the gamma-glutamyl phosphate reductase family.

It is found in the cytoplasm. The catalysed reaction is L-glutamate 5-semialdehyde + phosphate + NADP(+) = L-glutamyl 5-phosphate + NADPH + H(+). It participates in amino-acid biosynthesis; L-proline biosynthesis; L-glutamate 5-semialdehyde from L-glutamate: step 2/2. Its function is as follows. Catalyzes the NADPH-dependent reduction of L-glutamate 5-phosphate into L-glutamate 5-semialdehyde and phosphate. The product spontaneously undergoes cyclization to form 1-pyrroline-5-carboxylate. The chain is Gamma-glutamyl phosphate reductase from Streptococcus pneumoniae (strain CGSP14).